The primary structure comprises 366 residues: Tripartite motif-containing protein 54 (366 aa).

The RING-type zinc finger occupies 26–82; the sequence is CPICLEMFSKPVVILPCQHNLCRKCANDVFQASNPLWQSRSSTTVSSGGRFRCPSCR. The segment at 121–163 adopts a B box-type zinc-finger fold; it reads EQHLMCEEHEDEKINIYCLSCEVPTCSLCKVFGAHKDCEVAPL. Cys126, His129, Cys149, and His155 together coordinate Zn(2+). A mediates microtubule-binding and homooligomerization region spans residues 168–211; it reads KRQKSELSDGIAMLVAGNDRVQAVITQMEEVCQTIEENSRRQKQ. Positions 185–258 form a coiled coil; sequence NDRVQAVITQ…LIRQYGDHLE (74 aa). Positions 271-329 constitute a COS domain; the sequence is MEEPQMALYLQQAKELINKVGTMSKVELAGRPEPGYERMDQFTVSVEHVAEMLRTIDFQ. The disordered stretch occupies residues 326-366; that stretch reads IDFQPGTSGEEEDEEVAVEGEEGNAGPEEERTDGRESTGQH. Positions 334-347 are enriched in acidic residues; it reads GEEEDEEVAVEGEE. The span at 353–366 shows a compositional bias: basic and acidic residues; sequence EEERTDGRESTGQH.

As to quaternary structure, homooligomer and heterooligomer. Interacts with TRIM63 and probably with TRIM55. Interacts with tubulin.

Its subcellular location is the cytoplasm. It localises to the cytoskeleton. The protein localises to the myofibril. The protein resides in the sarcomere. It is found in the z line. Functionally, may bind and stabilize microtubules during myotubes formation. The chain is Tripartite motif-containing protein 54 (TRIM54) from Bos taurus (Bovine).